We begin with the raw amino-acid sequence, 155 residues long: MSDKNEGYKVIADNRQARYLYEILETYEAGIELTGTEVKSIRAGKVNLQDGYALLRNGEAWLINIHISPYNASGQYFNHEPRRTRKLLLHRQELRKLIGKVEQQGLTLIPLKMYLKRGWVKVSIALGKGKKLHDKREDLKRRQDQRDIQRAMKSY.

Residues 136 to 155 (REDLKRRQDQRDIQRAMKSY) are disordered.

It belongs to the SmpB family.

The protein resides in the cytoplasm. Its function is as follows. Required for rescue of stalled ribosomes mediated by trans-translation. Binds to transfer-messenger RNA (tmRNA), required for stable association of tmRNA with ribosomes. tmRNA and SmpB together mimic tRNA shape, replacing the anticodon stem-loop with SmpB. tmRNA is encoded by the ssrA gene; the 2 termini fold to resemble tRNA(Ala) and it encodes a 'tag peptide', a short internal open reading frame. During trans-translation Ala-aminoacylated tmRNA acts like a tRNA, entering the A-site of stalled ribosomes, displacing the stalled mRNA. The ribosome then switches to translate the ORF on the tmRNA; the nascent peptide is terminated with the 'tag peptide' encoded by the tmRNA and targeted for degradation. The ribosome is freed to recommence translation, which seems to be the essential function of trans-translation. The polypeptide is SsrA-binding protein (Nostoc punctiforme (strain ATCC 29133 / PCC 73102)).